Consider the following 115-residue polypeptide: DNA-directed RNA polymerase II subunit RPB11-b1 (115 aa).

This sequence belongs to the archaeal Rpo11/eukaryotic RPB11/RPC19 RNA polymerase subunit family. Component of the RNA polymerase II (Pol II) complex consisting of 12 subunits. As to expression, ubiquitously expressed.

It is found in the nucleus. Its function is as follows. DNA-dependent RNA polymerase catalyzes the transcription of DNA into RNA using the four ribonucleoside triphosphates as substrates. Component of RNA polymerase II which synthesizes mRNA precursors and many functional non-coding RNAs. Pol II is the central component of the basal RNA polymerase II transcription machinery. It is composed of mobile elements that move relative to each other. RPB11 is part of the core element with the central large cleft. The chain is DNA-directed RNA polymerase II subunit RPB11-b1 (POLR2J2) from Homo sapiens (Human).